The following is a 406-amino-acid chain: Tyrosine--tRNA ligase (406 aa).

Tyr35 provides a ligand contact to L-tyrosine. Positions 40–49 (PTGPSLHIGH) match the 'HIGH' region motif. Residues Tyr168 and Gln172 each coordinate L-tyrosine. Positions 228 to 232 (KMGKS) match the 'KMSKS' region motif. Lys231 is an ATP binding site. The 67-residue stretch at 339–405 (IGIIDLFAEA…GKKRFMRIIF (67 aa)) folds into the S4 RNA-binding domain.

This sequence belongs to the class-I aminoacyl-tRNA synthetase family. TyrS type 1 subfamily. In terms of assembly, homodimer.

Its subcellular location is the cytoplasm. It catalyses the reaction tRNA(Tyr) + L-tyrosine + ATP = L-tyrosyl-tRNA(Tyr) + AMP + diphosphate + H(+). Functionally, catalyzes the attachment of tyrosine to tRNA(Tyr) in a two-step reaction: tyrosine is first activated by ATP to form Tyr-AMP and then transferred to the acceptor end of tRNA(Tyr). The chain is Tyrosine--tRNA ligase from Treponema denticola (strain ATCC 35405 / DSM 14222 / CIP 103919 / JCM 8153 / KCTC 15104).